A 434-amino-acid chain; its full sequence is UDP-N-acetylglucosamine 1-carboxyvinyltransferase 1 (434 aa).

22-23 contributes to the phosphoenolpyruvate binding site; that stretch reads KN. Position 93 (Arg93) interacts with UDP-N-acetyl-alpha-D-glucosamine. Cys117 functions as the Proton donor in the catalytic mechanism. 2-(S-cysteinyl)pyruvic acid O-phosphothioketal is present on Cys117. Residues 122–126, Asp306, and Val328 contribute to the UDP-N-acetyl-alpha-D-glucosamine site; that span reads RPIDQ.

Belongs to the EPSP synthase family. MurA subfamily.

The protein resides in the cytoplasm. It carries out the reaction phosphoenolpyruvate + UDP-N-acetyl-alpha-D-glucosamine = UDP-N-acetyl-3-O-(1-carboxyvinyl)-alpha-D-glucosamine + phosphate. The protein operates within cell wall biogenesis; peptidoglycan biosynthesis. Its function is as follows. Cell wall formation. Adds enolpyruvyl to UDP-N-acetylglucosamine. This chain is UDP-N-acetylglucosamine 1-carboxyvinyltransferase 1, found in Bacillus cereus (strain ATCC 10987 / NRS 248).